Consider the following 488-residue polypeptide: Glutamyl-tRNA(Gln) amidotransferase subunit A (488 aa).

Residues K77 and S152 each act as charge relay system in the active site. S176 (acyl-ester intermediate) is an active-site residue.

The protein belongs to the amidase family. GatA subfamily. In terms of assembly, heterotrimer of A, B and C subunits.

The catalysed reaction is L-glutamyl-tRNA(Gln) + L-glutamine + ATP + H2O = L-glutaminyl-tRNA(Gln) + L-glutamate + ADP + phosphate + H(+). Functionally, allows the formation of correctly charged Gln-tRNA(Gln) through the transamidation of misacylated Glu-tRNA(Gln) in organisms which lack glutaminyl-tRNA synthetase. The reaction takes place in the presence of glutamine and ATP through an activated gamma-phospho-Glu-tRNA(Gln). The sequence is that of Glutamyl-tRNA(Gln) amidotransferase subunit A from Streptococcus agalactiae serotype Ia (strain ATCC 27591 / A909 / CDC SS700).